Consider the following 963-residue polypeptide: Iron-responsive element-binding protein 2 (963 aa).

The [4Fe-4S] cluster site is built by C512, C578, and C581.

This sequence belongs to the aconitase/IPM isomerase family. In terms of assembly, interacts with RBCK1 isoform 1 and isoform 2 only in iron-rich conditions. Interacts (when associated with the 4Fe-4S) with FBXL5. Interacts with CIAO1 and CIAO2A. It depends on [4Fe-4S] cluster as a cofactor. Ubiquitinated and degraded by the proteasome in presence of high level of iron and oxygen. Ubiquitinated by a SCF complex containing FBXL5. Upon iron and oxygen depletion FBXL5 is degraded, preventing ubiquitination and allowing its RNA-binding activity.

Its subcellular location is the cytoplasm. Functionally, RNA-binding protein that binds to iron-responsive elements (IRES), which are stem-loop structures found in the 5'-UTR of ferritin, and delta aminolevulinic acid synthase mRNAs, and in the 3'-UTR of transferrin receptor mRNA. Binding to the IRE element in ferritin results in the repression of its mRNA translation. Binding of the protein to the transferrin receptor mRNA inhibits the degradation of this otherwise rapidly degraded mRNA. The chain is Iron-responsive element-binding protein 2 (IREB2) from Homo sapiens (Human).